A 476-amino-acid polypeptide reads, in one-letter code: 3-isopropylmalate dehydratase large subunit (476 aa).

Cysteine 353, cysteine 413, and cysteine 416 together coordinate [4Fe-4S] cluster.

The protein belongs to the aconitase/IPM isomerase family. LeuC type 1 subfamily. In terms of assembly, heterodimer of LeuC and LeuD. It depends on [4Fe-4S] cluster as a cofactor.

The catalysed reaction is (2R,3S)-3-isopropylmalate = (2S)-2-isopropylmalate. It participates in amino-acid biosynthesis; L-leucine biosynthesis; L-leucine from 3-methyl-2-oxobutanoate: step 2/4. Catalyzes the isomerization between 2-isopropylmalate and 3-isopropylmalate, via the formation of 2-isopropylmaleate. In Yersinia pseudotuberculosis serotype O:1b (strain IP 31758), this protein is 3-isopropylmalate dehydratase large subunit.